The sequence spans 394 residues: G2/mitotic-specific cyclin-B2 (394 aa).

It belongs to the cyclin family. Cyclin AB subfamily. In terms of assembly, interacts with the CDK1 protein kinase to form a serine/threonine kinase holoenzyme complex also known as maturation promoting factor (MPF). The cyclin subunit imparts substrate specificity to the complex.

Its function is as follows. Essential for the control of the cell cycle at the G2/M (mitosis) transition. In Anguilla japonica (Japanese eel), this protein is G2/mitotic-specific cyclin-B2 (ccnb2).